The sequence spans 434 residues: Septin-7 (434 aa).

Position 27 is a phosphotyrosine (Tyr27). Residues 44–313 (RGFEFTLMVV…ENYRSRKLAA (270 aa)) form the Septin-type G domain. The tract at residues 44 to 314 (RGFEFTLMVV…NYRSRKLAAV (271 aa)) is interaction with SEPTIN12. The segment at 54–61 (GESGLGKS) is G1 motif. 54 to 61 (GESGLGKS) contributes to the GTP binding site. Ser74 carries the post-translational modification Phosphoserine. GTP is bound by residues Thr87, Gly113, and 192 to 200 (KADTLTPEE). The tract at residues 110 to 113 (DTPG) is G3 motif. Residues 191 to 194 (AKAD) form a G4 motif region. Thr225 is modified (phosphothreonine). 2 residues coordinate GTP: Gly247 and Arg262. The stretch at 329-434 (TKSPLAQMEE…EKNKKKGKIF (106 aa)) forms a coiled coil. Ser331 bears the Phosphoserine mark. Position 370 is an N6-acetyllysine (Lys370). Residues 377 to 407 (QRRHEQMKKNLEAQHKGLEEKRRQFEDEKAN) show a composition bias toward basic and acidic residues. The disordered stretch occupies residues 377–434 (QRRHEQMKKNLEAQHKGLEEKRRQFEDEKANWEAQQRILEQQNSSRTLEKNKKKGKIF). Ser421 carries the phosphoserine modification. Thr423 carries the phosphothreonine modification.

This sequence belongs to the TRAFAC class TrmE-Era-EngA-EngB-Septin-like GTPase superfamily. Septin GTPase family. As to quaternary structure, septins polymerize into heterooligomeric protein complexes that form filaments, and associate with cellular membranes, actin filaments and microtubules. GTPase activity is required for filament formation. Filaments are assembled from asymmetrical heterotrimers, composed of SEPTIN2, SEPTIN6 and SEPTIN7 that associate head-to-head to form a hexameric unit. Within the trimer, directly interacts with SEPTIN6, while interaction with SEPTIN2 seems indirect. In the absence of SEPTIN6, forms homodimers. Interacts directly with CENPE and links CENPE to septin filaments composed of SEPTIN2, SEPTIN6 and SEPTIN7. Interacts with SEPTIN5, SEPTIN8, SEPTIN9 and SEPTIN11. Component of a septin core octameric complex consisting of SEPTIN12, SEPTIN7, SEPTIN6 and SEPTIN2 or SEPTIN4 in the order 12-7-6-2-2-6-7-12 or 12-7-6-4-4-6-7-12 and located in the sperm annulus; the SEPTIN12:SEPTIN7 association is mediated by the respective GTP-binding domains.

The protein localises to the cytoplasm. Its subcellular location is the chromosome. It localises to the centromere. It is found in the kinetochore. The protein resides in the cytoskeleton. The protein localises to the spindle. Its subcellular location is the cleavage furrow. It localises to the midbody. It is found in the cilium axoneme. The protein resides in the cell projection. The protein localises to the cilium. Its subcellular location is the flagellum. Its function is as follows. Filament-forming cytoskeletal GTPase. Required for normal organization of the actin cytoskeleton. Required for normal progress through mitosis. Involved in cytokinesis. Required for normal association of CENPE with the kinetochore. Plays a role in ciliogenesis and collective cell movements. Forms a filamentous structure with SEPTIN12, SEPTIN6, SEPTIN2 and probably SEPTIN4 at the sperm annulus which is required for the structural integrity and motility of the sperm tail during postmeiotic differentiation. The chain is Septin-7 from Pan troglodytes (Chimpanzee).